Here is a 347-residue protein sequence, read N- to C-terminus: Anthranilate phosphoribosyltransferase (347 aa).

Residues glycine 88, 91–92 (GD), threonine 96, 98–101 (NIST), 116–124 (KHGGRSVSS), and serine 128 contribute to the 5-phospho-alpha-D-ribose 1-diphosphate site. Residue glycine 88 participates in anthranilate binding. Serine 100 is a Mg(2+) binding site. Position 174 (arginine 174) interacts with anthranilate. Positions 233 and 234 each coordinate Mg(2+).

Belongs to the anthranilate phosphoribosyltransferase family. Homodimer. The cofactor is Mg(2+).

The enzyme catalyses N-(5-phospho-beta-D-ribosyl)anthranilate + diphosphate = 5-phospho-alpha-D-ribose 1-diphosphate + anthranilate. It participates in amino-acid biosynthesis; L-tryptophan biosynthesis; L-tryptophan from chorismate: step 2/5. Functionally, catalyzes the transfer of the phosphoribosyl group of 5-phosphorylribose-1-pyrophosphate (PRPP) to anthranilate to yield N-(5'-phosphoribosyl)-anthranilate (PRA). The protein is Anthranilate phosphoribosyltransferase of Polaromonas sp. (strain JS666 / ATCC BAA-500).